We begin with the raw amino-acid sequence, 555 residues long: Perforin-1 (555 aa).

The first 21 residues, 1-21 (MAARLLLLGILLLLLPLPVPA), serve as a signal peptide directing secretion. 3 cysteine pairs are disulfide-bonded: Cys-23–Cys-76, Cys-31–Cys-73, and Cys-102–Cys-176. One can recognise an MACPF domain in the interval 27–375 (ARSECKRSHK…QYLTDRARWR (349 aa)). The chain crosses the membrane as a beta stranded span at residues 129 to 149 (WKVGLDVTPKPTSNVHVSVAG). Residue Asn-205 is glycosylated (N-linked (GlcNAc...) asparagine). 4 cysteine pairs are disulfide-bonded: Cys-242–Cys-408, Cys-377–Cys-393, Cys-381–Cys-395, and Cys-397–Cys-407. Residues 257 to 279 (CLTVEAQVNIGIHGSISAEAKAC) traverse the membrane as a beta stranded segment. Residues 376 to 408 (DCSRPCPPGRQKSPRDPCQCVCHGSAVTTQDCC) enclose the EGF-like domain. Positions 397 to 519 (CHGSAVTTQD…CNLNHGHLKF (123 aa)) constitute a C2 domain. Residues Gly-429, Asp-430, Thr-433, Ala-434, Asp-436, Asp-484, Asp-486, Asp-490, Asp-491, and Asp-492 each coordinate Ca(2+). 2 cysteine pairs are disulfide-bonded: Cys-497–Cys-510 and Cys-525–Cys-534. An N-linked (GlcNAc...) asparagine glycan is attached at Asn-549.

The protein belongs to the complement C6/C7/C8/C9 family. In terms of assembly, monomer, as soluble protein. Homooligomer; homooligomerizes to form a pore-forming ring. It depends on Ca(2+) as a cofactor. Post-translationally, N-glycosylated.

The protein resides in the cytolytic granule. It localises to the secreted. It is found in the cell membrane. The protein localises to the endosome lumen. Pore-forming protein that plays a key role in granzyme-mediated programmed cell death, and in defense against virus-infected or neoplastic cells. Plays an important role in killing other cells that are recognized as non-self by the immune system, e.g. in transplant rejection or some forms of autoimmune disease. Can insert into the membrane of target cells in its calcium-bound form, oligomerize and form large pores. Promotes cytolysis and apoptosis of target cells by mediating the passage and uptake of cytotoxic granzymes. Facilitates the delivery of cationic cargo protein, while anionic or neural proteins are not delivered efficiently. Perforin pores allow the release of mature caspase-7 (CASP7) into the extracellular milieu. The chain is Perforin-1 (PRF1) from Homo sapiens (Human).